A 460-amino-acid polypeptide reads, in one-letter code: Ufm1-specific protease 2 (460 aa).

Residues C293, D417, and H419 contribute to the active site.

The protein belongs to the peptidase C78 family.

It localises to the endoplasmic reticulum. Its subcellular location is the cytoplasm. The protein localises to the nucleus. Its function is as follows. Thiol-dependent isopeptidase that specifically cleaves UFM1, a ubiquitin-like modifier protein, from conjugated proteins. While it is also able to mediate the processing of UFM1 precursors, a prerequisite for conjugation reactions, UFSP2 mainly acts as a protein deUFMylase that mediates deconjugation of UFM1 from target proteins. The chain is Ufm1-specific protease 2 from Gallus gallus (Chicken).